The primary structure comprises 82 residues: ATP synthase subunit c (82 aa).

Transmembrane regions (helical) follow at residues 7 to 27 and 53 to 73; these read FVALAAGLIIGLGAVGACIGI and FLLAGLIDAAFLIGVGIAMMF.

It belongs to the ATPase C chain family. In terms of assembly, F-type ATPases have 2 components, F(1) - the catalytic core - and F(0) - the membrane proton channel. F(1) has five subunits: alpha(3), beta(3), gamma(1), delta(1), epsilon(1). F(0) has three main subunits: a(1), b(2) and c(10-14). The alpha and beta chains form an alternating ring which encloses part of the gamma chain. F(1) is attached to F(0) by a central stalk formed by the gamma and epsilon chains, while a peripheral stalk is formed by the delta and b chains.

Its subcellular location is the cell inner membrane. Its function is as follows. F(1)F(0) ATP synthase produces ATP from ADP in the presence of a proton or sodium gradient. F-type ATPases consist of two structural domains, F(1) containing the extramembraneous catalytic core and F(0) containing the membrane proton channel, linked together by a central stalk and a peripheral stalk. During catalysis, ATP synthesis in the catalytic domain of F(1) is coupled via a rotary mechanism of the central stalk subunits to proton translocation. Key component of the F(0) channel; it plays a direct role in translocation across the membrane. A homomeric c-ring of between 10-14 subunits forms the central stalk rotor element with the F(1) delta and epsilon subunits. The polypeptide is ATP synthase subunit c (Polaromonas sp. (strain JS666 / ATCC BAA-500)).